We begin with the raw amino-acid sequence, 937 residues long: Scaffold attachment factor B1 (937 aa).

A disordered region spans residues 1–35 (MAETLSGLGDASAAGAAAVSSAASETGTRRLSDLR). N-acetylalanine is present on Ala2. The span at 11 to 24 (ASAAGAAAVSSAAS) shows a compositional bias: low complexity. Ser24 and Ser55 each carry phosphoserine. Residues 31-65 (LSDLRVIDLRAELKKRNLDSSGNKSVLMERLKKAI) form the SAP domain. The segment at 64 to 117 (AIEDEGGNPDEIEVTSECNKKMPKRPSKGRKPEDEGVEDNGLEENSGDGQEDVE) is disordered. Over residues 67 to 77 (DEGGNPDEIEV) the composition is skewed to acidic residues. Position 79 is a phosphoserine (Ser79). Residues 98–117 (EGVEDNGLEENSGDGQEDVE) show a composition bias toward acidic residues. Residues Lys172 and Lys186 each participate in a glycyl lysine isopeptide (Lys-Gly) (interchain with G-Cter in SUMO2) cross-link. Residue Thr188 is modified to Phosphothreonine. 3 positions are modified to phosphoserine: Ser195, Ser197, and Ser209. Residues 222 to 429 (GETCKSEPVK…EKGRSSCGRN (208 aa)) form a disordered region. Basic and acidic residues predominate over residues 225 to 234 (CKSEPVKEEG). Lys231 participates in a covalent cross-link: Glycyl lysine isopeptide (Lys-Gly) (interchain with G-Cter in SUMO). Acidic residues predominate over residues 268–287 (EEEEEEEEEDQEEEQEEEGD). Lys316 participates in a covalent cross-link: Glycyl lysine isopeptide (Lys-Gly) (interchain with G-Cter in SUMO). Positions 341–356 (EQSSTAAQLPEATSQE) are enriched in polar residues. Over residues 370–380 (QDSKEDVKKFA) the composition is skewed to basic and acidic residues. Lys403 participates in a covalent cross-link: Glycyl lysine isopeptide (Lys-Gly) (interchain with G-Cter in SUMO2). Residues Ser405 and Ser406 each carry the phosphoserine modification. Over residues 412-423 (DTKRLSREEKGR) the composition is skewed to basic and acidic residues. A Glycyl lysine isopeptide (Lys-Gly) (interchain with G-Cter in SUMO2) cross-link involves residue Lys414. In terms of domain architecture, RRM spans 428–506 (RNFWVSGLSS…KMISVEKAKS (79 aa)). At Ser437 the chain carries Phosphoserine. 2 stretches are compositionally biased toward basic and acidic residues: residues 499-573 (ISVE…ERSR) and 581-592 (GTERTVVMDKSK). Disordered stretches follow at residues 499–661 (ISVE…WERE), 684–738 (RMER…YEVD), and 771–937 (FDHR…TRRY). Residues Lys505, Lys536, Lys565, and Lys592 each participate in a glycyl lysine isopeptide (Lys-Gly) (interchain with G-Cter in SUMO2) cross-link. Residues 550-814 (TDDGSTEKSK…RHGGPERHGR (265 aa)) form an interaction with POLR2A; SFRS1; SFRS9 and SFRS10 region. Lys600 participates in a covalent cross-link: Glycyl lysine isopeptide (Lys-Gly) (interchain with G-Cter in SUMO1); alternate. A Glycyl lysine isopeptide (Lys-Gly) (interchain with G-Cter in SUMO2); alternate cross-link involves residue Lys600. A phosphoserine mark is found at Ser602, Ser604, Ser623, and Ser626. The span at 603–661 (GSKERASKSQDRKSASREKRSVVSFDKVKESRKSRDSESRRERERSEREQRLQAQWERE) shows a compositional bias: basic and acidic residues. The Nuclear localization signal motif lies at 621–638 (KRSVVSFDKVKESRKSRD). The interaction with SAFB2 stretch occupies residues 621–937 (KRSVVSFDKV…PSDARFTRRY (317 aa)). Lys629 is subject to N6-acetyllysine. Residues 652–726 (QRLQAQWERE…RQQELRYEQE (75 aa)) are a coiled coil. Residues 771-818 (FDHRDRGRYPNHSVDRREGSRSMMGDREGQHYPERHGGPERHGRDSRD) are compositionally biased toward basic and acidic residues. Residue Arg832 is modified to Omega-N-methylarginine. Composition is skewed to basic and acidic residues over residues 838–854 (PRRDWGEHGRRLEDDRA) and 863–873 (MMERDHKRWQG). A Glycyl lysine isopeptide (Lys-Gly) (interchain with G-Cter in SUMO2) cross-link involves residue Lys869. Asymmetric dimethylarginine is present on residues Arg890, Arg896, Arg906, and Arg912. Basic and acidic residues predominate over residues 927–937 (RPSDARFTRRY).

In terms of assembly, monomer and homodimer. Forms heterodimers with SAFB2. Interacts with KHDRBS3. Interacts with CLK2. Interacts with POLR2A, ASF/SRSF1, SRp30c/SRFS9 and TRA2B/SFRS10. Interacts with SRPK1 and inhibits its activity. Interacts with RBMX. Interacts with FUS. Interacts with ZBED4. In terms of processing, sumoylated by PIAS1 with SUMO1 and SUMO2/3, desumoylated by SENP1. Sumoylation is required for transcriptional repressor activity.

Its subcellular location is the nucleus. Binds to scaffold/matrix attachment region (S/MAR) DNA and forms a molecular assembly point to allow the formation of a 'transcriptosomal' complex (consisting of SR proteins and RNA polymerase II) coupling transcription and RNA processing. Functions as an estrogen receptor corepressor and can also bind to the HSP27 promoter and decrease its transcription. Thereby acts as a negative regulator of cell proliferation. When associated with RBMX, binds to and stimulates transcription from the SREBF1 promoter. In Mus musculus (Mouse), this protein is Scaffold attachment factor B1 (Safb).